A 631-amino-acid polypeptide reads, in one-letter code: Tumor protein p73 (631 aa).

A transactivation region spans residues 1–43 (MAQTSSSSSSTFEHLWSSLEPDSTYFDLPQPSQGTSEASGSEE). Disordered stretches follow at residues 23–43 (STYF…GSEE) and 69–113 (SRAA…NTDY). T24 carries the phosphothreonine; by PLK1 modification. At Y25 the chain carries Phosphotyrosine; by SRC and HCK. Polar residues-rich tracts occupy residues 30-43 (QPSQ…GSEE) and 86-100 (PTHS…TFDT). Residue Y91 is modified to Phosphotyrosine; by ABL1. The DNA-binding stretch occupies residues 123–302 (FQQSSTAKSA…DRKADEDHYR (180 aa)). Residues C186, H189, C250, and C254 each coordinate Zn(2+). The span at 306-315 (ALNESTTKNG) shows a compositional bias: polar residues. Residues 306–334 (ALNESTTKNGAASKRAFKQSPPAIPALGT) form a disordered region. The tract at residues 337–372 (KKRRHGDEDMFYMHVRGRENFEILMKVKESLELMEL) is interaction with HIPK2. Residues 337-378 (KKRRHGDEDMFYMHVRGRENFEILMKVKESLELMELVPQPLV) are oligomerization. The PPxY motif motif lies at 477-481 (PPPPY). The SAM domain maps to 479-545 (PPYHADPSLV…WRGLQDLKQS (67 aa)). K622 is covalently cross-linked (Glycyl lysine isopeptide (Lys-Gly) (interchain with G-Cter in SUMO); alternate). K622 is covalently cross-linked (Glycyl lysine isopeptide (Lys-Gly) (interchain with G-Cter in SUMO2); alternate).

It belongs to the p53 family. In terms of assembly, found in a complex with p53/TP53 and CABLES1. The C-terminal oligomerization domain binds to the ABL1 tyrosine kinase SH3 domain. Interacts with HECW2, HIPK2, RANBP9 and WWOX. Interacts (via SAM domain) with FBXO45 (via B30.2/SPRY domain). Interacts with YAP1 (phosphorylated form). Interacts with HCK (via SH3 domain); this inhibits TP73 activity and degradation. Interacts (via SAM domain) with NQO1; this interaction is NADH-dependent, stabilizes TP73 in response to oxidative stress and protects it from ubiquitin-independent degradation by the 20S proteasome. It depends on Zn(2+) as a cofactor. In terms of processing, sumoylated on Lys-622, which potentiates proteasomal degradation but does not affect transcriptional activity. Phosphorylation by PLK1 and PLK3 inhibits the transcription regulator activity and pro-apoptotic function. Higher levels of phosphorylation seen in striatal neurons of. mutant huntingtin (htt) transgenic mice. Post-translationally, polyubiquitinated by RCHY1/PIRH2; leading to its degradation by the proteasome. Found in striatal neurons of mutant huntingtin (htt) transgenic mice (at protein level). Isoform 1 is expressed in the nasal epithelium, the vomeronasal organ, the hippocampus and the hypothalamus.

The protein localises to the nucleus. It localises to the cytoplasm. Its function is as follows. Participates in the apoptotic response to DNA damage. Isoforms containing the transactivation domain are pro-apoptotic, isoforms lacking the domain are anti-apoptotic and block the function of p53 and transactivating p73 isoforms. May be a tumor suppressor protein. Is an activator of FOXJ1 expression, essential for the positive regulation of lung ciliated cell differentiation. The protein is Tumor protein p73 (Tp73) of Mus musculus (Mouse).